Consider the following 451-residue polypeptide: Phosphoglucosamine mutase (451 aa).

Ser102 acts as the Phosphoserine intermediate in catalysis. Mg(2+) is bound by residues Ser102, Asp243, Asp245, and Asp247. A Phosphoserine modification is found at Ser102.

This sequence belongs to the phosphohexose mutase family. Mg(2+) is required as a cofactor. In terms of processing, activated by phosphorylation.

The catalysed reaction is alpha-D-glucosamine 1-phosphate = D-glucosamine 6-phosphate. Functionally, catalyzes the conversion of glucosamine-6-phosphate to glucosamine-1-phosphate. In Brucella anthropi (strain ATCC 49188 / DSM 6882 / CCUG 24695 / JCM 21032 / LMG 3331 / NBRC 15819 / NCTC 12168 / Alc 37) (Ochrobactrum anthropi), this protein is Phosphoglucosamine mutase.